A 250-amino-acid chain; its full sequence is ATP synthase subunit a (250 aa).

A run of 6 helical transmembrane segments spans residues 26 to 46, 84 to 104, 114 to 134, 143 to 163, 193 to 213, and 216 to 236; these read FTNA…FLYL, FFPM…LGMF, IIVT…YGFY, LFVP…IEVI, FVAS…LPLI, and VALT…FAVL.

Belongs to the ATPase A chain family. In terms of assembly, F-type ATPases have 2 components, CF(1) - the catalytic core - and CF(0) - the membrane proton channel. CF(1) has five subunits: alpha(3), beta(3), gamma(1), delta(1), epsilon(1). CF(0) has three main subunits: a(1), b(2) and c(9-12). The alpha and beta chains form an alternating ring which encloses part of the gamma chain. CF(1) is attached to CF(0) by a central stalk formed by the gamma and epsilon chains, while a peripheral stalk is formed by the delta and b chains.

The protein localises to the cell inner membrane. Its function is as follows. Key component of the proton channel; it plays a direct role in the translocation of protons across the membrane. The chain is ATP synthase subunit a from Sinorhizobium fredii (strain NBRC 101917 / NGR234).